The primary structure comprises 120 residues: Ribonuclease P protein component 2 (120 aa).

It belongs to the eukaryotic/archaeal RNase P protein component 2 family. In terms of assembly, consists of a catalytic RNA component and at least 4-5 protein subunits.

The protein localises to the cytoplasm. The enzyme catalyses Endonucleolytic cleavage of RNA, removing 5'-extranucleotides from tRNA precursor.. Its function is as follows. Part of ribonuclease P, a protein complex that generates mature tRNA molecules by cleaving their 5'-ends. This chain is Ribonuclease P protein component 2, found in Thermococcus kodakarensis (strain ATCC BAA-918 / JCM 12380 / KOD1) (Pyrococcus kodakaraensis (strain KOD1)).